A 1632-amino-acid polypeptide reads, in one-letter code: Guanine exchange factor for Rac 30 (1632 aa).

The region spanning asparagine 16 to lysine 122 is the Calponin-homology (CH) domain. Disordered regions lie at residues glutamine 134–lysine 155 and phenylalanine 171–glycine 285. 2 stretches are compositionally biased toward low complexity: residues threonine 137–threonine 154 and glutamine 180–threonine 284. IQ domains follow at residues aspartate 388 to glutamine 417 and alanine 432 to arginine 461. In terms of domain architecture, DH spans arginine 460–lysine 638. Over residues glutamine 775 to asparagine 795 the composition is skewed to low complexity. A disordered region spans residues glutamine 775–serine 798. Positions aspartate 940–lysine 1038 constitute a PH 1 domain. Positions serine 1138–serine 1156 are enriched in low complexity. Residues serine 1138 to glutamine 1161 are disordered. The 119-residue stretch at asparagine 1271 to glycine 1389 folds into the Arf-GAP domain. The C4-type zinc finger occupies cysteine 1286 to cysteine 1309. Low complexity-rich tracts occupy residues asparagine 1380–threonine 1402, serine 1409–threonine 1431, and serine 1441–threonine 1481. A disordered region spans residues asparagine 1380–threonine 1521. Residues aspartate 1500–alanine 1515 are compositionally biased toward polar residues. The 100-residue stretch at lysine 1532–threonine 1631 folds into the PH 2 domain.

It localises to the membrane. The protein resides in the cytoplasmic vesicle. The protein localises to the phagosome membrane. Its function is as follows. GTPase-activating protein for Rac involved in streaming and development. The protein is Guanine exchange factor for Rac 30 (gxcDD) of Dictyostelium discoideum (Social amoeba).